The primary structure comprises 312 residues: Methionyl-tRNA formyltransferase (312 aa).

Ser-110–Pro-113 is a binding site for (6S)-5,6,7,8-tetrahydrofolate.

The protein belongs to the Fmt family.

The catalysed reaction is L-methionyl-tRNA(fMet) + (6R)-10-formyltetrahydrofolate = N-formyl-L-methionyl-tRNA(fMet) + (6S)-5,6,7,8-tetrahydrofolate + H(+). Attaches a formyl group to the free amino group of methionyl-tRNA(fMet). The formyl group appears to play a dual role in the initiator identity of N-formylmethionyl-tRNA by promoting its recognition by IF2 and preventing the misappropriation of this tRNA by the elongation apparatus. In Mycobacterium marinum (strain ATCC BAA-535 / M), this protein is Methionyl-tRNA formyltransferase.